The chain runs to 116 residues: Cuticle protein AM1274 (116 aa).

Gln1 is modified (pyrrolidone carboxylic acid). The segment at 1–22 (QLANEPPIEIIRQESTDNGDGN) is disordered. In terms of domain architecture, Chitin-binding type R&amp;R spans 20-85 (DGNFNFLFET…PVSDFIPTPH (66 aa)). Thr83 carries O-linked (HexNAc) threonine glycosylation.

Arthrodial membrane.

The sequence is that of Cuticle protein AM1274 from Cancer pagurus (Rock crab).